The sequence spans 85 residues: uncharacterized protein (85 aa).

Disordered stretches follow at residues 1–22 (MFAP…TSGF) and 41–85 (EKER…SFLR). The segment covering 75 to 85 (FPSNYRGSFLR) has biased composition (polar residues).

This is an uncharacterized protein from Dryophytes versicolor (chameleon treefrog).